Consider the following 1360-residue polypeptide: Activating molecule in BECN1-regulated autophagy protein 1B (1360 aa).

WD repeat units lie at residues 50–89 (DNPRSTFLLAFSPDRNLVASTHVNHNIYITDVKTGKCLHS), 92–132 (GHRR…ESWF), and 134–174 (ESNV…AVVK). Residues 249-258 (RSSGAQANDQ) are compositionally biased toward polar residues. 7 disordered regions span residues 249–277 (RSSGAQANDQSRPAPEPREPPSIPRFQYP), 315–364 (PTGL…NSAH), 412–490 (GVET…QRNN), 514–573 (ELER…RCRS), 587–616 (WERSGQTSSSSSSQEGPSWPLSVPPFEDPG), 664–688 (PTVSASSEAAEDALNPEVPVDNPDE), and 754–796 (TLSN…MPRN). Low complexity predominate over residues 319 to 333 (QPSDSTQPQTQSGPS). A compositionally biased stretch (polar residues) spans 350–361 (AFSSVFSGTAGN). Positions 428 to 437 (SSSSMDLLSL) are enriched in low complexity. 2 stretches are compositionally biased toward polar residues: residues 443–454 (GSSSSPIYTSAT) and 473–490 (DGTSSGHHPFYDNTQRNN). Residues 590-607 (SGQTSSSSSSQEGPSWPL) are compositionally biased toward low complexity. The segment covering 754–768 (TLSNSQADSQSNNPS) has biased composition (polar residues). Acidic residues predominate over residues 775–784 (SDGDYEDIEE). 2 short sequence motifs (TQT motif) span residues 1109-1111 (TQT) and 1121-1123 (TQT). Disordered regions lie at residues 1120–1142 (ETQTERELPSASTFQNTHTTSRH) and 1241–1360 (SQTS…LYGR). Polar residues-rich tracts occupy residues 1129-1142 (SASTFQNTHTTSRH) and 1241-1252 (SQTSVRTAQGGN). Over residues 1278–1288 (APGPSGSSGAP) the composition is skewed to low complexity. The span at 1311–1321 (FGDRQPDDVQR) shows a compositional bias: basic and acidic residues. Residues 1329–1347 (NMSNHSNNNNNDHSNSYSE) show a composition bias toward low complexity. Residues 1348–1360 (SRSRDYPDDLYGR) show a composition bias toward basic and acidic residues.

It belongs to the WD repeat AMBRA1 family. Component of the DCX(AMBRA1) E3 ubiquitin ligase complex.

It localises to the endoplasmic reticulum. The protein localises to the cytoplasm. The protein resides in the cytoskeleton. Its subcellular location is the cytoplasmic vesicle. It is found in the autophagosome. It localises to the mitochondrion. The protein localises to the cytosol. The protein resides in the nucleus. Its subcellular location is the cell junction. It is found in the focal adhesion. It participates in protein modification; protein ubiquitination. Substrate-recognition component of a DCX (DDB1-CUL4-X-box) E3 ubiquitin-protein ligase complex involved in cell cycle control and autophagy. The DCX(AMBRA1) complex specifically mediates the polyubiquitination of target proteins. Acts as an upstream master regulator of the transition from G1 to S cell phase: ambra1b specifically recognizes and binds phosphorylated cyclin-D (ccnd1, ccnd2 and ccnd3), leading to cyclin-D ubiquitination by the DCX(AMBRA1) complex and subsequent degradation. Acts as a regulator of Cul5-RING (CRL5) E3 ubiquitin-protein ligase complexes by mediating ubiquitination and degradation of Elongin-C (eloc) component of CRL5 complexes. Acts as a key regulator of autophagy by modulating the BECN1-PIK3C3 complex: controls protein turnover during neuronal development, and regulates normal cell survival and proliferation. In normal conditions, ambra1b is tethered to the cytoskeleton via interaction with dyneins light chains. Upon autophagy induction, ambra1b is released from the cytoskeletal docking site to induce autophagosome nucleation by mediating ubiquitination of proteins involved in autophagy. Also acts as an activator of mitophagy. Required for skeletal muscle development. The polypeptide is Activating molecule in BECN1-regulated autophagy protein 1B (Danio rerio (Zebrafish)).